The following is a 108-amino-acid chain: VQ motif-containing protein 10 (108 aa).

A VQ motif is present at residues 29–38; it reads FKTVVQELTG. Residues 65–85 form a disordered region; the sequence is IGEDTRQLHGGGGGGGRMGTT. Positions 73-82 are enriched in gly residues; sequence HGGGGGGGRM.

In terms of assembly, interacts with WRKY25, WRKY26 and WRKY33.

The protein resides in the nucleus. Functionally, may modulate WRKY transcription factor activities. The sequence is that of VQ motif-containing protein 10 from Arabidopsis thaliana (Mouse-ear cress).